A 270-amino-acid polypeptide reads, in one-letter code: Protein-ADP-ribose hydrolase (270 aa).

In terms of domain architecture, Macro spans 73–267; sequence VSVKDCQKTN…LYDTYLQKEN (195 aa). ADP-D-ribose is bound by residues aspartate 92, isoleucine 93, and asparagine 106. Zn(2+) is bound by residues cysteine 112, histidine 117, and cysteine 119. Residues cysteine 119, isoleucine 120, aspartate 121, serine 212, threonine 213, glycine 214, glutamate 215, and phenylalanine 216 each coordinate ADP-D-ribose.

This sequence belongs to the MacroD-type family. Zn-Macro subfamily. The cofactor is Zn(2+).

The catalysed reaction is 4-O-(ADP-D-ribosyl)-L-aspartyl-[protein] + H2O = L-aspartyl-[protein] + ADP-D-ribose + H(+). Its function is as follows. ADP-ribosylhydrolase that specifically reverses the SirTM-mediated mono-ADP-ribosylation at an asparatate residue of GcvH-L, by releasing ADP-ribose from the target protein. May play a role in the regulation of the response to host-induced oxidative stress. In Streptococcus pyogenes serotype M18 (strain MGAS8232), this protein is Protein-ADP-ribose hydrolase.